We begin with the raw amino-acid sequence, 387 residues long: GTPase Obg (387 aa).

Positions 1–159 (MKFVDEAIIR…RSLKLELLLL (159 aa)) constitute an Obg domain. Positions 160 to 333 (ADVGLLGMPN…LAVKLLDFIA (174 aa)) constitute an OBG-type G domain. GTP is bound by residues 166 to 173 (GMPNAGKS), 191 to 195 (FTTLV), 213 to 216 (DIPG), 283 to 286 (NKAD), and 314 to 316 (SAY). The Mg(2+) site is built by S173 and T193.

This sequence belongs to the TRAFAC class OBG-HflX-like GTPase superfamily. OBG GTPase family. As to quaternary structure, monomer. Mg(2+) serves as cofactor.

The protein resides in the cytoplasm. Functionally, an essential GTPase which binds GTP, GDP and possibly (p)ppGpp with moderate affinity, with high nucleotide exchange rates and a fairly low GTP hydrolysis rate. Plays a role in control of the cell cycle, stress response, ribosome biogenesis and in those bacteria that undergo differentiation, in morphogenesis control. This chain is GTPase Obg, found in Shewanella halifaxensis (strain HAW-EB4).